Reading from the N-terminus, the 447-residue chain is Glutamyl-tRNA(Gln) amidotransferase subunit A (447 aa).

Residues Lys50 and Ser125 each act as charge relay system in the active site. Residue Ser149 is the Acyl-ester intermediate of the active site.

The protein belongs to the amidase family. GatA subfamily. Heterotrimer of A, B and C subunits.

The catalysed reaction is L-glutamyl-tRNA(Gln) + L-glutamine + ATP + H2O = L-glutaminyl-tRNA(Gln) + L-glutamate + ADP + phosphate + H(+). Its function is as follows. Allows the formation of correctly charged Gln-tRNA(Gln) through the transamidation of misacylated Glu-tRNA(Gln) in organisms which lack glutaminyl-tRNA synthetase. The reaction takes place in the presence of glutamine and ATP through an activated gamma-phospho-Glu-tRNA(Gln). The protein is Glutamyl-tRNA(Gln) amidotransferase subunit A of Sulfurimonas denitrificans (strain ATCC 33889 / DSM 1251) (Thiomicrospira denitrificans (strain ATCC 33889 / DSM 1251)).